A 361-amino-acid polypeptide reads, in one-letter code: Molybdenum import ATP-binding protein ModC (361 aa).

In terms of domain architecture, ABC transporter spans 1-228 (MLTINIEKQL…EQMRPWVPLQ (228 aa)). 31-38 (GRSGAGKT) is an ATP binding site. The Mop domain maps to 289–356 (RSSIRNVLKG…IKGVTMTQMD (68 aa)).

It belongs to the ABC transporter superfamily. Molybdate importer (TC 3.A.1.8) family. In terms of assembly, the complex is composed of two ATP-binding proteins (ModC), two transmembrane proteins (ModB) and a solute-binding protein (ModA).

It is found in the cell inner membrane. The catalysed reaction is molybdate(out) + ATP + H2O = molybdate(in) + ADP + phosphate + H(+). Part of the ABC transporter complex ModABC involved in molybdenum import. Responsible for energy coupling to the transport system. In Shewanella oneidensis (strain ATCC 700550 / JCM 31522 / CIP 106686 / LMG 19005 / NCIMB 14063 / MR-1), this protein is Molybdenum import ATP-binding protein ModC.